We begin with the raw amino-acid sequence, 513 residues long: Sucrose transport protein SUC1 (513 aa).

Positions 1–11 are enriched in basic and acidic residues; the sequence is MGAYETEKPTK. Positions 1-26 are disordered; the sequence is MGAYETEKPTKDAAALETQSPEDFDQ. Residues 1–32 lie on the Cytoplasmic side of the membrane; it reads MGAYETEKPTKDAAALETQSPEDFDQPSPLRK. The residue at position 20 (Ser-20) is a Phosphoserine. Residues 33 to 53 form a helical membrane-spanning segment; it reads IISVASIAAGVQFGWALQLSL. The Extracellular segment spans residues 54–67; that stretch reads LTPYVQLLGIPHKW. The helical transmembrane segment at 68–88 threads the bilayer; that stretch reads SSLIWLCGPVSGMIVQPIVGF. Over 89 to 101 the chain is Cytoplasmic; sequence HSDRCRSKFGRRR. A helical transmembrane segment spans residues 102–122; the sequence is PFIATGAALVAVAVFLIGYAA. Topologically, residues 123–139 are extracellular; that stretch reads DFGYKMGDKLEEKVKVR. Residues 140–160 form a helical membrane-spanning segment; the sequence is AIGIFALGFWILDVANNTLQG. Residues 161-178 lie on the Cytoplasmic side of the membrane; it reads PCRAFLADLAAGDAKRTR. Residues 179–199 form a helical membrane-spanning segment; that stretch reads VANAFFSFFMAVGNVLGYAAG. The Extracellular segment spans residues 200–224; it reads SYTNLHKMFPFTMTKACDIYCANLK. Residues 225–245 traverse the membrane as a helical segment; the sequence is TCFFLSITLLLIVTVTSLWYV. Over 246–282 the chain is Cytoplasmic; sequence NDKQWSPPPRNADDDEKTSSVPLFGEIFGAFKVMKRP. Residues 283-303 traverse the membrane as a helical segment; that stretch reads MWMLLIVTALNWIAWFPFLLF. Residues 304 to 334 are Extracellular-facing; sequence DTDWMGREVFGGDSDGNERSKKLYSLGVQSG. Residues 335–355 form a helical membrane-spanning segment; it reads AMGLMFNSIVLGFMSLGVEWI. Over 356 to 365 the chain is Cytoplasmic; the sequence is GRKLGGAKRL. Residues 366 to 386 traverse the membrane as a helical segment; that stretch reads WGIVNFILAAGLAMTVLVTKF. The Extracellular segment spans residues 387-408; that stretch reads AEDHRKTAGDLAGPSASVKAGA. The chain crosses the membrane as a helical span at residues 409-429; it reads LSLFAVLGIPLAITFSTPFAL. Topologically, residues 430–441 are cytoplasmic; that stretch reads ASIFSSCSGAGQ. Residues 442–462 traverse the membrane as a helical segment; it reads GLSLGVLNLAIVIPQMIVSLG. The Extracellular segment spans residues 463–474; the sequence is GGPFDALFGGGN. The chain crosses the membrane as a helical span at residues 475–495; it reads LPAFIVAAIAAAISGVLALTV. Topologically, residues 496-513 are cytoplasmic; it reads LPSPPPDAPKATTMGGFH.

It belongs to the glycoside-pentoside-hexuronide (GPH) cation symporter transporter (TC 2.A.2.4) family. In terms of tissue distribution, expressed in flowers (at protein level). Highly expressed in pollen. Expressed in pollen tubes and root vascular cylinder, pericycle and endodermis.

It localises to the membrane. It carries out the reaction sucrose(out) + H(+)(out) = sucrose(in) + H(+)(in). It functions in the pathway glycan biosynthesis; sucrose metabolism. Its activity is regulated as follows. Inhibited by DEPC, protonophores (e.g. dinitrophenol and carbonyl cyanide m-chlorophenyl-hydrazone (CCCP)), and SH group inhibitors (e.g. N-ethylmaleimide (NEM) and p-chloromercuriphenyl sulphonic acid (PCMPS)). Its function is as follows. Responsible for the transport of sucrose into the cell, with the concomitant uptake of protons (symport system). This transport is both voltage- and energy-dependent. Can also transport other glucosides such as maltose, alpha-phenylglucoside and beta-phenylglucoside. May also transport biotin. Required for normal pollen germination and anthocyanin accumulation induced by sucrose. The sequence is that of Sucrose transport protein SUC1 from Arabidopsis thaliana (Mouse-ear cress).